Reading from the N-terminus, the 511-residue chain is MFS-type transporper mpsC (511 aa).

Over residues 1 to 35 (MTSSTESKHSNDESTDLEKQDAEESHGLPEERKQD) the composition is skewed to basic and acidic residues. Residues 1 to 65 (MTSSTESKHS…PDDPANPMNW (65 aa)) form a disordered region. Transmembrane regions (helical) follow at residues 74-94 (VVMASLTTLFANITSTAFAPA), 108-128 (ITAALTVSIYLLGFAFGPLVI), 147-167 (ITVAFLIGCAQAKNLGMFLVF), 169-189 (LITGIAGSGPGTIGGGTIADV), 201-221 (AFAMGPLMGPVLGPLMSGFIA), 228-248 (WVFRVLCIATGVMTIVLYFVM), and 303-323 (PITLLLSLYCAFVFGLLILLF). An N-linked (GlcNAc...) asparagine glycan is attached at N337. A run of 5 helical transmembrane segments spans residues 342 to 362 (GLSYLGLGFGLAIGLVLFGML), 383 to 403 (LLLMVWFAPVIPGGFFWYGWT), 411 to 431 (ILPMMGTSLIGMGALMVMMPI), 443 to 465 (VAASALAANTLLRSLAGCFLPLA), and 476 to 496 (GWGNTLLGFIAIGFTCLPILF).

This sequence belongs to the major facilitator superfamily.

Its subcellular location is the membrane. MFS-type transporper; part of the gene cluster that mediates the biosynthesis of macrophasetins, 3-decalinoyltetramic acids (DTAs) which feature a tetramate (pyrrolidine-2,4-dione) unit connected to a decalin fragment and that have potent bioactivities. Efflux pump that might be required for efficient secretion of macrophasetins. The protein is MFS-type transporper mpsC of Macrophomina phaseolina (strain MS6) (Charcoal rot fungus).